The sequence spans 124 residues: Fluoride-specific ion channel FluC 2 (124 aa).

The next 4 membrane-spanning stretches (helical) occupy residues 1–21 (MNFL…YAIT), 36–58 (SNLP…FIFG), 63–85 (VFIY…TMNT), and 104–124 (LSSY…AILF). Positions 75 and 78 each coordinate Na(+).

This sequence belongs to the fluoride channel Fluc/FEX (TC 1.A.43) family. In terms of assembly, heterodimer composed of FluC1 and FluC2. Neither FluC1 nor FluC2 alone catalyzes fluoride efflux from liposomes.

It localises to the cell membrane. It carries out the reaction fluoride(in) = fluoride(out). With respect to regulation, na(+) is not transported, but it plays an essential structural role and its presence is essential for fluoride channel function. Fluoride-specific ion channel. Important for reducing fluoride concentration in the cell, thus reducing its toxicity. The polypeptide is Fluoride-specific ion channel FluC 2 (Lactobacillus acidophilus (strain ATCC 700396 / NCK56 / N2 / NCFM)).